We begin with the raw amino-acid sequence, 230 residues long: uncharacterized protein (230 aa).

The first 16 residues, 1–16 (MTCVNVCFFLFPPCHR), serve as a signal peptide directing secretion. Helical transmembrane passes span 27–47 (VDLLIPSLCCSLAVFPSIPLI), 118–138 (LFFFFLLFFLSFSFSFSFLFF), 150–170 (FPILHFLFFFFLCVCVFLSFL), and 172–191 (SLSHLLSLAILFLPLLLRVF).

Its subcellular location is the cytoplasm. It is found in the nucleus membrane. This is an uncharacterized protein from Schizosaccharomyces pombe (strain 972 / ATCC 24843) (Fission yeast).